The primary structure comprises 351 residues: C(7)-cyclitol 7-kinase (351 aa).

It belongs to the ROK (NagC/XylR) family.

The enzyme catalyses valienone + ATP = valienone 7-phosphate + ADP + H(+). It catalyses the reaction validone + ATP = validone 7-phosphate + ADP + H(+). Functionally, involved in the biosynthesis of the antifungal agent validamycin A. Catalyzes the phosphorylation of valienone and validone to their 7-phosphate derivatives. The chain is C(7)-cyclitol 7-kinase from Streptomyces hygroscopicus subsp. jinggangensis (strain 5008).